We begin with the raw amino-acid sequence, 216 residues long: Probable nicotinate-nucleotide adenylyltransferase (216 aa).

It belongs to the NadD family.

The catalysed reaction is nicotinate beta-D-ribonucleotide + ATP + H(+) = deamido-NAD(+) + diphosphate. The protein operates within cofactor biosynthesis; NAD(+) biosynthesis; deamido-NAD(+) from nicotinate D-ribonucleotide: step 1/1. Catalyzes the reversible adenylation of nicotinate mononucleotide (NaMN) to nicotinic acid adenine dinucleotide (NaAD). This is Probable nicotinate-nucleotide adenylyltransferase from Geotalea uraniireducens (strain Rf4) (Geobacter uraniireducens).